We begin with the raw amino-acid sequence, 837 residues long: Tuftelin-interacting protein 11 (837 aa).

Positions 1-13 are enriched in basic and acidic residues; sequence MSLSHLYRDGEGH. 3 disordered regions span residues 1-31, 54-73, and 85-136; these read MSLS…DWDL, WAER…RARD, and LKKG…AGGT. The required for interaction with DHX15 stretch occupies residues 1–50; sequence MSLSHLYRDGEGHMDDDEDERENFEITDWDLQNEFNPNRQRHWQTKEEAT. Ser2 carries the post-translational modification Phosphoserine. Residues 14–28 are compositionally biased toward acidic residues; the sequence is MDDDEDERENFEITD. Residues 54 to 64 are compositionally biased toward basic and acidic residues; that stretch reads WAERDSDEERP. A phosphoserine mark is found at Ser59 and Ser98. Over residues 91–102 the composition is skewed to acidic residues; the sequence is EEAELEDSDDEE. A compositionally biased stretch (basic and acidic residues) spans 103-116; the sequence is KPVKQDEFPKDFGP. Ser144 carries the phosphoserine modification. Residues 149 to 195 form the G-patch domain; the sequence is TKGIGQKLLQKMGYVPGRGLGKNAQGIINPIEAKQRKGKGAVGAYGS. 2 disordered regions span residues 183 to 236 and 287 to 313; these read QRKG…KKKP and HKHS…ARAP. Phosphoserine is present on Ser210. The segment covering 217 to 231 has biased composition (basic and acidic residues); the sequence is EFQKELSQWRKDPSG. The short motif at 700–705 is the Nuclear localization signal element; sequence VKDKFN. Positions 710–734 are required for nuclear speckle localization; sequence IMNRAVSSNVGAYMQPGAREHIAYL.

The protein belongs to the TFP11/STIP family. As to quaternary structure, identified in the spliceosome C complex. Found in the Intron Large (IL) complex, a post-mRNA release spliceosomal complex containing the excised intron, U2, U5 and U6 snRNPs, and splicing factors. Interacts with TUFT1. Interacts with DHX15; indicative for a recruitment of DHX15 to the IL complex. Interacts with GCFC2.

The protein localises to the cytoplasm. It localises to the nucleus. Functionally, involved in pre-mRNA splicing, specifically in spliceosome disassembly during late-stage splicing events. Intron turnover seems to proceed through reactions in two lariat-intron associated complexes termed Intron Large (IL) and Intron Small (IS). In cooperation with DHX15 seems to mediate the transition of the U2, U5 and U6 snRNP-containing IL complex to the snRNP-free IS complex leading to efficient debranching and turnover of excised introns. May play a role in the differentiation of ameloblasts and odontoblasts or in the forming of the enamel extracellular matrix. In Bos taurus (Bovine), this protein is Tuftelin-interacting protein 11 (TFIP11).